We begin with the raw amino-acid sequence, 61 residues long: Alpha-conotoxine-like Am1.4 (61 aa).

An N-terminal signal peptide occupies residues 1–21; that stretch reads MGMRMMFTVFLLVVLATTVVS. A propeptide spanning residues 22 to 44 is cleaved from the precursor; the sequence is FMSGRASHGRNAAASDLIALTIK.

This sequence belongs to the conotoxin A superfamily. Is not hydroxylated. Post-translationally, contains 2 disulfide bonds. Expressed by the venom duct.

The protein resides in the secreted. Functionally, alpha-conotoxins act on postsynaptic membranes, they bind to the nicotinic acetylcholine receptors (nAChR) and thus inhibit them. In Conus amadis (Amadis cone), this protein is Alpha-conotoxine-like Am1.4.